The chain runs to 563 residues: Cystathionine gamma-synthase-like protein ankD (563 aa).

The disordered stretch occupies residues 1-37 (MGELGPASAQHGSDSISFSGSYTQPLGAPQPPNEPHA). Positions 10–24 (QHGSDSISFSGSYTQ) are enriched in polar residues.

Belongs to the trans-sulfuration enzymes family. MET7 subfamily. Requires pyridoxal 5'-phosphate as cofactor.

The enzyme catalyses cyclo(L-arginyl-(Z)-dehydro-3,4-dihydroxytyrosyl) + O-acetyl-L-homoserine = cyclo(L-arginyl-(Z)-dehydro-4-O-homoseryl-tyrosyl) + acetate + H(+). Its pathway is secondary metabolite biosynthesis. In terms of biological role, cystathionine gamma-synthase-like protein; part of the ank cluster that mediates the biosynthesis of NK13650 C, a highly modified cyclo-arginine-tyrosine dipeptide. AnkD catalyzes the attachment of L-homoserine moiety using O-acetyl-L-homoserine as co-substrate. Within the pathway, the cyclodipeptide synthase ankA acts as the scaffold-generating enzyme and is responsible for formation of the cyclo-Arg-Tyr diketopiperazine (cRY) from L-Arg and L-Tyr. The ankA product cRY is desaturated by the cytochrome P450 monooxygenase ankB to yield a dehydro-cyclodipeptide intermediate. The FAD-dependent monooxygenase ankC then installs the m-OH, ankD catalyzes the attachment of L-homoserine, and ankE ligates citrate to the ankD product to yield NK13650 B. The O-methyltransferase ankF is responsible for methylation of the C-17 phenol group of NK13650 B to produce NK13650 D. Amidation of NK13650 D with L-Asp by ankG then leads to the production of NK13650 C, whereas amidation of NK13650 B produces NK13650 A. The sequence is that of Cystathionine gamma-synthase-like protein ankD from Aspergillus thermomutatus (Neosartorya pseudofischeri).